The primary structure comprises 266 residues: Putative carbamate hydrolase RutD (266 aa).

The AB hydrolase-1 domain maps to P14–L115.

This sequence belongs to the AB hydrolase superfamily. Hydrolase RutD family.

It catalyses the reaction carbamate + 2 H(+) = NH4(+) + CO2. Its function is as follows. Involved in pyrimidine catabolism. May facilitate the hydrolysis of carbamate, a reaction that can also occur spontaneously. The polypeptide is Putative carbamate hydrolase RutD (Shigella flexneri serotype 5b (strain 8401)).